The sequence spans 269 residues: Orotidine 5'-phosphate decarboxylase (269 aa).

Lys92 functions as the Proton donor in the catalytic mechanism.

This sequence belongs to the OMP decarboxylase family. Type 2 subfamily.

The catalysed reaction is orotidine 5'-phosphate + H(+) = UMP + CO2. It participates in pyrimidine metabolism; UMP biosynthesis via de novo pathway; UMP from orotate: step 2/2. The chain is Orotidine 5'-phosphate decarboxylase from Natronomonas pharaonis (strain ATCC 35678 / DSM 2160 / CIP 103997 / JCM 8858 / NBRC 14720 / NCIMB 2260 / Gabara) (Halobacterium pharaonis).